The chain runs to 49 residues: Small, acid-soluble spore protein O (49 aa).

Positions 1 to 49 are disordered; that stretch reads MGKRKANHTISGMNAASAQGQGAGYNEEFANENLTPAERQNNKKRKKNQ. Polar residues predominate over residues 8–20; the sequence is HTISGMNAASAQG.

It belongs to the SspO family.

Its subcellular location is the spore core. This Bacillus anthracis (strain A0248) protein is Small, acid-soluble spore protein O.